Reading from the N-terminus, the 431-residue chain is Nuclear envelope integral membrane protein 1 (431 aa).

The signal sequence occupies residues 1–29 (MAGEVEGEGCRVSWGVLVALLLLPLPSLC). The next 5 membrane-spanning stretches (helical) occupy residues 151–171 (PRLF…DTLS), 175–195 (IFYY…ILVF), 206–226 (PFVA…QLVF), 236–256 (YWQY…AFCY), and 266–286 (SINI…YISV). An a; required for its colocalization with lamins at the nuclear envelope region spans residues 176-287 (FYYSTGITVG…GLLLMYISVQ (112 aa)). A Nuclear localization signal motif is present at residues 317 to 325 (RKIKLKRGK). A b; required for interaction with ran region spans residues 326 to 395 (PSPPRLLTEE…LTPNEVSVHE (70 aa)). Residues 326–431 (PSPPRLLTEE…IEPVLYQDLR (106 aa)) are interaction with banf1-a and banf1-b. Residues 368–375 (SRIQSPKR) form a BAF-binding site (BBS); essential for interaction with banf1-a, banf1-b and ran region.

It belongs to the NEMP family. Homooligomer. Interacts with banf1-a and banf1-b. Interacts with ran-gtp. In terms of processing, phosphorylated.

Its subcellular location is the nucleus inner membrane. The protein localises to the nucleus envelope. Its function is as follows. In concert with ran, required for proper eye development. May be involved in the expression of early eye marker genes. Contributes to nuclear envelope stiffness in germ cells. Required for fertility. Essential for normal erythropoiesis. Required for efficient nuclear envelope opening and enucleation during the late stages of erythroblast maturation. The chain is Nuclear envelope integral membrane protein 1 (nemp1) from Xenopus tropicalis (Western clawed frog).